The chain runs to 1184 residues: Protocadherin-12 (1184 aa).

Residues 1 to 24 (MMQLLQLLLGLLGPGGYLFLLGDC) form the signal peptide. Residues 25 to 718 (QEVTTLTVKY…PGALSMSMLT (694 aa)) lie on the Extracellular side of the membrane. Cadherin domains are found at residues 28 to 135 (TTLT…QPRF), 136 to 244 (PKGE…SPAF), 245 to 352 (AESS…IPSI), 355 to 460 (TWAS…APVF), and 461 to 565 (EKSR…APEV). Asparagine 415 carries an N-linked (GlcNAc...) asparagine glycan. 3 N-linked (GlcNAc...) asparagine glycosylation sites follow: asparagine 582, asparagine 659, and asparagine 662. The 112-residue stretch at 600–711 (PAGTDTPPLA…LRDSARKPGA (112 aa)) folds into the Cadherin 6 domain. Residues 719 to 739 (VICLAVLLGIFGLILALFMSI) traverse the membrane as a helical segment. The Cytoplasmic segment spans residues 740 to 1184 (CRTEKKDNRA…RGSSSSSRCL (445 aa)). 2 disordered regions span residues 854–928 (RQRN…ESGP) and 973–1023 (QFQP…DPEE). Residue serine 859 is modified to Phosphoserine. Positions 1012–1023 (PEQEEGPLDPEE) are enriched in acidic residues. At serine 1062 the chain carries Phosphoserine. The segment at 1153–1184 (SAASGMKVQGDPGGKTGTEGKSRGSSSSSRCL) is disordered. Positions 1175–1184 (RGSSSSSRCL) are enriched in low complexity.

Post-translationally, cleaved by ADAM10 close to the transmembrane domain to release the Protocadherin-12, secreted form in the serum. Cleavage results in reduced cellular adhesion in a cell migration assay. In terms of tissue distribution, expressed in highly vascularized tissues including the heart and placenta, but most tissues contain a low level of expression. Prominent expression in the spleen. Present in villous and extravillous trophoblast (at protein level).

It localises to the cell membrane. The protein localises to the cell junction. The protein resides in the secreted. In terms of biological role, cellular adhesion molecule that may play an important role in cell-cell interactions at interendothelial junctions. Acts as a regulator of cell migration, probably via increasing cell-cell adhesion. Promotes homotypic calcium-dependent aggregation and adhesion and clusters at intercellular junctions. Unable to bind to catenins, weakly associates with the cytoskeleton. This chain is Protocadherin-12, found in Homo sapiens (Human).